A 355-amino-acid polypeptide reads, in one-letter code: C-C chemokine receptor type 3 (355 aa).

The Extracellular segment spans residues 1–34; the sequence is MTTSLDTVETFGPTSYDDDMGLLCEKADVGALIA. The chain crosses the membrane as a helical span at residues 35 to 62; that stretch reads QFVPPLYSLVFMVGLLGNVVVVMILIKY. Residues 63 to 72 lie on the Cytoplasmic side of the membrane; sequence RRLRIMTNIY. The chain crosses the membrane as a helical span at residues 73-93; it reads LLNLAISDLLFLFTLPFWIHY. The Extracellular segment spans residues 94-107; it reads VRERNWVFSHGMCK. C106 and C183 are disulfide-bonded. The helical transmembrane segment at 108–129 threads the bilayer; the sequence is VLSGFYHTGLYSEIFFIILLTI. Residues 130–146 lie on the Cytoplasmic side of the membrane; that stretch reads DRYLAIVHAVFALRART. Residues 147–171 traverse the membrane as a helical segment; the sequence is VTFGVVTSIVTWGLAVLAALPEFIF. Topologically, residues 172 to 203 are extracellular; the sequence is YGTEELFPETLCSAIYPQDTVYSWRHFHTLRM. The chain crosses the membrane as a helical span at residues 204–223; that stretch reads TILCLALPLLVMAICYTGII. The Cytoplasmic portion of the chain corresponds to 224–239; that stretch reads KTLLRCPSKKKYKAIR. A helical membrane pass occupies residues 240-264; that stretch reads LIFVIMAVFFIFWTPYNVAILISTY. Topologically, residues 265 to 281 are extracellular; that stretch reads QSILFGPDCERSKHLDL. A helical membrane pass occupies residues 282–305; the sequence is FVLVTEVIAYSHCWVNPVIYAFVG. Residues 306-355 lie on the Cytoplasmic side of the membrane; the sequence is ERFRKYLRHFFHRHVLMHPGKYIPFLPSEKLERTSSVSPSTAEPELSIVF.

The protein belongs to the G-protein coupled receptor 1 family.

It is found in the cell membrane. Functionally, receptor for C-C type chemokine. Binds and responds to a variety of chemokines, including CCL11, CCL26, CCL7, CCL13, RANTES(CCL5) and CCL15. Subsequently transduces a signal by increasing the intracellular calcium ions level. In addition acts as a possible functional receptor for NARS1. This Macaca fascicularis (Crab-eating macaque) protein is C-C chemokine receptor type 3 (CCR3).